A 323-amino-acid polypeptide reads, in one-letter code: tRNA U34 carboxymethyltransferase (323 aa).

Residues lysine 91, tryptophan 105, lysine 110, glycine 130, 152–154, 181–182, methionine 196, tyrosine 200, and arginine 315 contribute to the carboxy-S-adenosyl-L-methionine site; these read DPT and IE.

This sequence belongs to the class I-like SAM-binding methyltransferase superfamily. CmoB family. As to quaternary structure, homotetramer.

It catalyses the reaction carboxy-S-adenosyl-L-methionine + 5-hydroxyuridine(34) in tRNA = 5-carboxymethoxyuridine(34) in tRNA + S-adenosyl-L-homocysteine + H(+). In terms of biological role, catalyzes carboxymethyl transfer from carboxy-S-adenosyl-L-methionine (Cx-SAM) to 5-hydroxyuridine (ho5U) to form 5-carboxymethoxyuridine (cmo5U) at position 34 in tRNAs. This is tRNA U34 carboxymethyltransferase from Photorhabdus laumondii subsp. laumondii (strain DSM 15139 / CIP 105565 / TT01) (Photorhabdus luminescens subsp. laumondii).